The primary structure comprises 415 residues: G patch domain-containing protein 4 (415 aa).

N-acetylmethionine is present on methionine 1. Threonine 4 carries the phosphothreonine modification. Residues 11 to 57 (GMKFAEEQLLKHGWTQGKGLGRRENGITQALKVTLKQDNHGVGHDPA) enclose the G-patch domain. Residue lysine 46 forms a Glycyl lysine isopeptide (Lys-Gly) (interchain with G-Cter in SUMO2) linkage. At threonine 116 the chain carries Phosphothreonine. Disordered regions lie at residues 116–141 (TSGE…TPPK) and 191–415 (LGTS…VDLS). The segment covering 118-141 (GEEKPDRDLGNCSDVDNHEPTPPK) has biased composition (basic and acidic residues). Serine 130 carries the post-translational modification Phosphoserine. Polar residues predominate over residues 191–201 (LGTSQPLTDSE). Positions 224-239 (SLGDELLGHTDRSFRD) are enriched in basic and acidic residues. Serine 258 carries the phosphoserine modification. Positions 335–345 (EDLDTQEEEGK) are enriched in acidic residues. Positions 353-364 (RKVRRKDKRKRQ) are enriched in basic residues. Basic and acidic residues predominate over residues 387–397 (AGERSRQYPKE). Basic residues predominate over residues 398-407 (RAKKKKRKRD).

This is G patch domain-containing protein 4 (Gpatch4) from Mus musculus (Mouse).